A 674-amino-acid polypeptide reads, in one-letter code: UvrABC system protein B (674 aa).

Residues 26 to 183 (EGLEDGLAHQ…RRLAELQYTR (158 aa)) enclose the Helicase ATP-binding domain. Residue 39–46 (GVTGSGKT) coordinates ATP. The short motif at 92-115 (YYDYYQPEAYVPSSDTFIEKDASV) is the Beta-hairpin element. The 167-residue stretch at 431 to 597 (QVDDLLSEIR…GLNKKISDIL (167 aa)) folds into the Helicase C-terminal domain. In terms of domain architecture, UVR spans 634-669 (QKRIHQLEAQMQQHAQNLEFEEAAQVRDQLHQVREL).

Belongs to the UvrB family. In terms of assembly, forms a heterotetramer with UvrA during the search for lesions. Interacts with UvrC in an incision complex.

The protein localises to the cytoplasm. In terms of biological role, the UvrABC repair system catalyzes the recognition and processing of DNA lesions. A damage recognition complex composed of 2 UvrA and 2 UvrB subunits scans DNA for abnormalities. Upon binding of the UvrA(2)B(2) complex to a putative damaged site, the DNA wraps around one UvrB monomer. DNA wrap is dependent on ATP binding by UvrB and probably causes local melting of the DNA helix, facilitating insertion of UvrB beta-hairpin between the DNA strands. Then UvrB probes one DNA strand for the presence of a lesion. If a lesion is found the UvrA subunits dissociate and the UvrB-DNA preincision complex is formed. This complex is subsequently bound by UvrC and the second UvrB is released. If no lesion is found, the DNA wraps around the other UvrB subunit that will check the other stand for damage. This chain is UvrABC system protein B, found in Erwinia tasmaniensis (strain DSM 17950 / CFBP 7177 / CIP 109463 / NCPPB 4357 / Et1/99).